The sequence spans 1448 residues: Gag-Pol polyprotein (1448 aa).

The N-myristoyl glycine; by host moiety is linked to residue Gly2. The Nuclear export signal motif lies at 16 to 22 (WEKIYLR). The Nuclear localization signal signature appears at 26 to 32 (KKKYMMK). Positions 107 to 116 (KMKAEQKEPE) are enriched in basic and acidic residues. The segment at 107-129 (KMKAEQKEPEPEQAAGAAAAPES) is disordered. A compositionally biased stretch (low complexity) spans 118 to 128 (EQAAGAAAAPE). Phosphotyrosine; by host is present on Tyr135. 2 CCHC-type zinc fingers span residues 393–410 (IKCFNCGKEGHLARNCKA) and 414–431 (KGCWKCGQEGHQMKDCRS). 2 stretches are compositionally biased toward basic and acidic residues: residues 446-460 (REARKFPPDNNKERA) and 473-490 (GEDHTGDREGRKGEDREL). Residues 446–490 (REARKFPPDNNKERANSPSNRELWVSGGEDHTGDREGRKGEDREL) form a disordered region. One can recognise a Peptidase A2 domain in the interval 517–586 (KEALLDTGAD…TPVNIIGRNF (70 aa)). Asp522 acts as the For protease activity; shared with dimeric partner in catalysis. The region spanning 640–830 (EGKISRIGPE…PPFLWMGYEL (191 aa)) is the Reverse transcriptase domain. Positions 706, 781, and 782 each coordinate Mg(2+). An RT 'primer grip' region spans residues 823–831 (FLWMGYELH). The Tryptophan repeat motif motif lies at 994–1010 (WETWWTEYWQATWIPDW). In terms of domain architecture, RNase H type-1 spans 1030 to 1153 (ISGAETYYVD…IDKLVSTGIR (124 aa)). Mg(2+)-binding residues include Asp1039, Glu1074, Asp1094, and Asp1145. An Integrase-type zinc finger spans residues 1159 to 1200 (DGIDKAQEEHERYHSNWKAMASDFNLPPIVAKEIVASCDKCQ). Positions 1168, 1172, 1196, and 1199 each coordinate Zn(2+). The 151-residue stretch at 1210 to 1360 (INCSPGVWQL…TAGERIIDII (151 aa)) folds into the Integrase catalytic domain. Residues Asp1220 and Asp1272 each coordinate Mg(2+). Positions 1379 to 1426 (FRVYYRDSREPTWKGPAKLLWKGEGAVVIQDNGDIKVVPRRKAKIIRD) form a DNA-binding region, integrase-type.

As to quaternary structure, homotrimer. Interacts with gp41 (via C-terminus). Homodimer. The active site consists of two apposed aspartic acid residues. In terms of assembly, heterodimer of p66 RT and p51 RT (RT p66/p51). Heterodimerization of RT is essential for DNA polymerase activity. Despite the sequence identities, p66 RT and p51 RT have distinct folding. As to quaternary structure, homotetramer; may further associate as a homohexadecamer. Requires Mg(2+) as cofactor. Post-translationally, specific enzymatic cleavages by the viral protease yield mature proteins. The protease is released by autocatalytic cleavage. The polyprotein is cleaved during and after budding, this process is termed maturation. Proteolytic cleavage of p66 RT removes the RNase H domain to yield the p51 RT subunit. Capsid protein p24 is phosphorylated.

The protein resides in the virion. It is found in the host nucleus. The protein localises to the host cytoplasm. It localises to the host cell membrane. It carries out the reaction Specific for a P1 residue that is hydrophobic, and P1' variable, but often Pro.. It catalyses the reaction Endohydrolysis of RNA in RNA/DNA hybrids. Three different cleavage modes: 1. sequence-specific internal cleavage of RNA. Human immunodeficiency virus type 1 and Moloney murine leukemia virus enzymes prefer to cleave the RNA strand one nucleotide away from the RNA-DNA junction. 2. RNA 5'-end directed cleavage 13-19 nucleotides from the RNA end. 3. DNA 3'-end directed cleavage 15-20 nucleotides away from the primer terminus.. The catalysed reaction is 3'-end directed exonucleolytic cleavage of viral RNA-DNA hybrid.. The enzyme catalyses DNA(n) + a 2'-deoxyribonucleoside 5'-triphosphate = DNA(n+1) + diphosphate. Its activity is regulated as follows. The viral protease is inhibited by many synthetic protease inhibitors (PIs), such as amprenavir, atazanavir, indinavir, loprinavir, nelfinavir, ritonavir and saquinavir. RT can be inhibited either by nucleoside RT inhibitors (NRTIs) or by non nucleoside RT inhibitors (NNRTIs). NRTIs act as chain terminators, whereas NNRTIs inhibit DNA polymerization by binding a small hydrophobic pocket near the RT active site and inducing an allosteric change in this region. Classical NRTIs are abacavir, adefovir (PMEA), didanosine (ddI), lamivudine (3TC), stavudine (d4T), tenofovir (PMPA), zalcitabine (ddC), and zidovudine (AZT). Classical NNRTIs are atevirdine (BHAP U-87201E), delavirdine, efavirenz (DMP-266), emivirine (I-EBU), and nevirapine (BI-RG-587). The tritherapies used as a basic effective treatment of AIDS associate two NRTIs and one NNRTI. Use of protease inhibitors in tritherapy regimens permit more ambitious therapeutic strategies. Gag-Pol polyprotein and Gag polyprotein may regulate their own translation, by the binding genomic RNA in the 5'-UTR. At low concentration, Gag-Pol and Gag would promote translation, whereas at high concentration, the polyproteins encapsidate genomic RNA and then shut off translation. Its function is as follows. Matrix protein p17 has two main functions: in infected cell, it targets Gag and Gag-pol polyproteins to the plasma membrane via a multipartite membrane-binding signal, that includes its myristointegration complex. The myristoylation signal and the NLS exert conflicting influences its subcellular localization. The key regulation of these motifs might be phosphorylation of a portion of MA molecules on the C-terminal tyrosine at the time of virus maturation, by virion-associated cellular tyrosine kinase. Implicated in the release from host cell mediated by Vpu. Functionally, capsid protein p24 forms the conical core that encapsulates the genomic RNA-nucleocapsid complex in the virion. The core is constituted by capsid protein hexamer subunits. The core is disassembled soon after virion entry. Interaction with host PPIA/CYPA protects the virus from restriction by host TRIM5-alpha and from an unknown antiviral activity in host cells. This capsid restriction by TRIM5 is one of the factors which restricts SIV to the simian species. In terms of biological role, nucleocapsid protein p7 encapsulates and protects viral dimeric unspliced (genomic) RNA. Binds these RNAs through its zinc fingers. Facilitates rearangement of nucleic acid secondary structure during retrotranscription of genomic RNA. This capability is referred to as nucleic acid chaperone activity. The aspartyl protease mediates proteolytic cleavages of Gag and Gag-Pol polyproteins during or shortly after the release of the virion from the plasma membrane. Cleavages take place as an ordered, step-wise cascade to yield mature proteins. This process is called maturation. Displays maximal activity during the budding process just prior to particle release from the cell. Also cleaves Nef and Vif, probably concomitantly with viral structural proteins on maturation of virus particles. Hydrolyzes host EIF4GI and PABP1 in order to shut off the capped cellular mRNA translation. The resulting inhibition of cellular protein synthesis serves to ensure maximal viral gene expression and to evade host immune response. Its function is as follows. Reverse transcriptase/ribonuclease H (RT) is a multifunctional enzyme that converts the viral dimeric RNA genome into dsDNA in the cytoplasm, shortly after virus entry into the cell. This enzyme displays a DNA polymerase activity that can copy either DNA or RNA templates, and a ribonuclease H (RNase H) activity that cleaves the RNA strand of RNA-DNA heteroduplexes in a partially processive 3' to 5' endonucleasic mode. Conversion of viral genomic RNA into dsDNA requires many steps. A tRNA binds to the primer-binding site (PBS) situated at the 5'-end of the viral RNA. RT uses the 3' end of the tRNA primer to perform a short round of RNA-dependent minus-strand DNA synthesis. The reading proceeds through the U5 region and ends after the repeated (R) region which is present at both ends of viral RNA. The portion of the RNA-DNA heteroduplex is digested by the RNase H, resulting in a ssDNA product attached to the tRNA primer. This ssDNA/tRNA hybridizes with the identical R region situated at the 3' end of viral RNA. This template exchange, known as minus-strand DNA strong stop transfer, can be either intra- or intermolecular. RT uses the 3' end of this newly synthesized short ssDNA to perform the RNA-dependent minus-strand DNA synthesis of the whole template. RNase H digests the RNA template except for two polypurine tracts (PPTs) situated at the 5'-end and near the center of the genome. It is not clear if both polymerase and RNase H activities are simultaneous. RNase H can probably proceed both in a polymerase-dependent (RNA cut into small fragments by the same RT performing DNA synthesis) and a polymerase-independent mode (cleavage of remaining RNA fragments by free RTs). Secondly, RT performs DNA-directed plus-strand DNA synthesis using the PPTs that have not been removed by RNase H as primers. PPTs and tRNA primers are then removed by RNase H. The 3' and 5' ssDNA PBS regions hybridize to form a circular dsDNA intermediate. Strand displacement synthesis by RT to the PBS and PPT ends produces a blunt ended, linear dsDNA copy of the viral genome that includes long terminal repeats (LTRs) at both ends. Functionally, integrase catalyzes viral DNA integration into the host chromosome, by performing a series of DNA cutting and joining reactions. This enzyme activity takes place after virion entry into a cell and reverse transcription of the RNA genome in dsDNA. The first step in the integration process is 3' processing. This step requires a complex comprising the viral genome, matrix protein, Vpr and integrase. This complex is called the pre-integration complex (PIC). The integrase protein removes 2 nucleotides from each 3' end of the viral DNA, leaving recessed CA OH's at the 3' ends. In the second step, the PIC enters cell nucleus. This process is mediated through integrase and Vpr proteins, and allows the virus to infect a non dividing cell. This ability to enter the nucleus is specific of lentiviruses, other retroviruses cannot and rely on cell division to access cell chromosomes. In the third step, termed strand transfer, the integrase protein joins the previously processed 3' ends to the 5' ends of strands of target cellular DNA at the site of integration. The 5'-ends are produced by integrase-catalyzed staggered cuts, 5 bp apart. A Y-shaped, gapped, recombination intermediate results, with the 5'-ends of the viral DNA strands and the 3' ends of target DNA strands remaining unjoined, flanking a gap of 5 bp. The last step is viral DNA integration into host chromosome. This involves host DNA repair synthesis in which the 5 bp gaps between the unjoined strands are filled in and then ligated. Since this process occurs at both cuts flanking the SIV genome, a 5 bp duplication of host DNA is produced at the ends of SIV integration. Alternatively, Integrase may catalyze the excision of viral DNA just after strand transfer, this is termed disintegration. The chain is Gag-Pol polyprotein (gag-pol) from Pan troglodytes (Chimpanzee).